Consider the following 379-residue polypeptide: Transcription factor TIP2 (379 aa).

The disordered stretch occupies residues 144 to 184; sequence MVGPFESSPTPRSGGGRKRSRATAGFHGGGPANGVEKKEKQ. Residues 173–186 are basic motif; degenerate; that stretch reads GPANGVEKKEKQRR. One can recognise a bHLH domain in the interval 173–222; that stretch reads GPANGVEKKEKQRRLRLTEKYNALMLLIPNRTKEDRATVISDAIEYIQEL. The helix-loop-helix motif stretch occupies residues 187 to 222; sequence LRLTEKYNALMLLIPNRTKEDRATVISDAIEYIQEL.

Belongs to the bHLH protein family. Homodimer. Interacts with TDR, but not with EAT1. As to expression, highly expressed in anthers; strong expression in the middle layer and tapetum, and weak expression in the endothecium.

It is found in the nucleus. In terms of biological role, transcription factor that binds to the E-box-containing promoter regions of the transcription factors TDR and EAT1, activating their expression. May have a role in specifying the cell pattern of the inner anther walls and functioning in meiosis progression. Required for male reproduction. Acts downstream of UDT1 and GAMYB, but upstream of TDR1 and EAT1 in pollen development. This is Transcription factor TIP2 (TIP2) from Oryza sativa subsp. japonica (Rice).